The following is a 273-amino-acid chain: NADPH-dependent 7-cyano-7-deazaguanine reductase (273 aa).

81 to 83 (VES) serves as a coordination point for substrate. Residue 83 to 84 (SK) participates in NADPH binding. The active-site Thioimide intermediate is cysteine 179. Residue aspartate 186 is the Proton donor of the active site. 218–219 (AE) provides a ligand contact to substrate. 247–248 (RG) lines the NADPH pocket.

The protein belongs to the GTP cyclohydrolase I family. QueF type 2 subfamily. In terms of assembly, homodimer.

Its subcellular location is the cytoplasm. It catalyses the reaction 7-aminomethyl-7-carbaguanine + 2 NADP(+) = 7-cyano-7-deazaguanine + 2 NADPH + 3 H(+). It participates in tRNA modification; tRNA-queuosine biosynthesis. In terms of biological role, catalyzes the NADPH-dependent reduction of 7-cyano-7-deazaguanine (preQ0) to 7-aminomethyl-7-deazaguanine (preQ1). The polypeptide is NADPH-dependent 7-cyano-7-deazaguanine reductase (Rickettsia prowazekii (strain Madrid E)).